The primary structure comprises 383 residues: Glutamate 5-kinase (383 aa).

Residue Lys17 participates in ATP binding. Residues Ser64, Asp151, and Asn165 each coordinate substrate. 185-186 lines the ATP pocket; the sequence is SD. In terms of domain architecture, PUA spans 291–367; the sequence is SGTIRVDAGA…DEIEGILGYN (77 aa).

This sequence belongs to the glutamate 5-kinase family.

It is found in the cytoplasm. It carries out the reaction L-glutamate + ATP = L-glutamyl 5-phosphate + ADP. The protein operates within amino-acid biosynthesis; L-proline biosynthesis; L-glutamate 5-semialdehyde from L-glutamate: step 1/2. Catalyzes the transfer of a phosphate group to glutamate to form L-glutamate 5-phosphate. The protein is Glutamate 5-kinase of Methanosarcina barkeri (strain Fusaro / DSM 804).